The chain runs to 345 residues: Molybdate/tungstate import ATP-binding protein WtpC (345 aa).

Residues 2–231 (LKVESISKDY…PKSEEVARFL (230 aa)) form the ABC transporter domain. 33 to 40 (GPSGSGKT) contacts ATP. The Mop domain maps to 280-345 (KTSARNVFKA…FKASAIHVFP (66 aa)).

It belongs to the ABC transporter superfamily. Sulfate/tungstate importer (TC 3.A.1.6) family. The complex is composed of two ATP-binding proteins (WtpC), two transmembrane proteins (WtpB) and a solute-binding protein (WtpA).

It localises to the cell membrane. The enzyme catalyses tungstate(in) + ATP + H2O = tungstate(out) + ADP + phosphate + H(+). Functionally, part of the ABC transporter complex WtpABC involved in molybdate/tungstate import. Responsible for energy coupling to the transport system. The protein is Molybdate/tungstate import ATP-binding protein WtpC (wtpC) of Pyrococcus horikoshii (strain ATCC 700860 / DSM 12428 / JCM 9974 / NBRC 100139 / OT-3).